The primary structure comprises 487 residues: Cytochrome P450 716A75 (487 aa).

A helical transmembrane segment spans residues 5–25; that stretch reads FVSLLSLFLLILLPLSLLFLF. C434 serves as a coordination point for heme.

It belongs to the cytochrome P450 family. The cofactor is heme.

It localises to the membrane. It carries out the reaction beta-amyrin + reduced [NADPH--hemoprotein reductase] + O2 = erythrodiol + oxidized [NADPH--hemoprotein reductase] + H2O + H(+). The enzyme catalyses erythrodiol + reduced [NADPH--hemoprotein reductase] + O2 = oleanolic aldehyde + oxidized [NADPH--hemoprotein reductase] + 2 H2O + H(+). It catalyses the reaction oleanolic aldehyde + reduced [NADPH--hemoprotein reductase] + O2 = oleanolate + oxidized [NADPH--hemoprotein reductase] + H2O + 2 H(+). Catalyzes the C-28 oxidation of beta-amyrin to form erythrodiol. Catalyzes the C-28 oxidation of erythrodiol to form oleanolic aldehyde. Catalyzes the C-28 oxidation of oleanolic aldehyde to form oleanolate. In Maesa lanceolata (False assegai), this protein is Cytochrome P450 716A75.